Here is a 137-residue protein sequence, read N- to C-terminus: Large-conductance mechanosensitive channel (137 aa).

Transmembrane regions (helical) follow at residues 14–34 and 81–101; these read VLDL…INSL and GSFL…FLIV.

This sequence belongs to the MscL family. As to quaternary structure, homopentamer.

It is found in the cell membrane. In terms of biological role, channel that opens in response to stretch forces in the membrane lipid bilayer. May participate in the regulation of osmotic pressure changes within the cell. This Chloroflexus aggregans (strain MD-66 / DSM 9485) protein is Large-conductance mechanosensitive channel.